Here is a 115-residue protein sequence, read N- to C-terminus: Large ribosomal subunit protein bL20c (115 aa).

This sequence belongs to the bacterial ribosomal protein bL20 family.

The protein resides in the plastid. Its subcellular location is the organellar chromatophore. Binds directly to 23S ribosomal RNA and is necessary for the in vitro assembly process of the 50S ribosomal subunit. It is not involved in the protein synthesizing functions of that subunit. The polypeptide is Large ribosomal subunit protein bL20c (Paulinella chromatophora).